The chain runs to 333 residues: UDP-N-acetylglucosamine--N-acetylmuramyl-(pentapeptide) pyrophosphoryl-undecaprenol N-acetylglucosamine transferase (333 aa).

Residues 10–12 (TGG), N124, S177, and Q275 each bind UDP-N-acetyl-alpha-D-glucosamine.

This sequence belongs to the glycosyltransferase 28 family. MurG subfamily.

The protein resides in the cell inner membrane. The enzyme catalyses di-trans,octa-cis-undecaprenyl diphospho-N-acetyl-alpha-D-muramoyl-L-alanyl-D-glutamyl-meso-2,6-diaminopimeloyl-D-alanyl-D-alanine + UDP-N-acetyl-alpha-D-glucosamine = di-trans,octa-cis-undecaprenyl diphospho-[N-acetyl-alpha-D-glucosaminyl-(1-&gt;4)]-N-acetyl-alpha-D-muramoyl-L-alanyl-D-glutamyl-meso-2,6-diaminopimeloyl-D-alanyl-D-alanine + UDP + H(+). It participates in cell wall biogenesis; peptidoglycan biosynthesis. Functionally, cell wall formation. Catalyzes the transfer of a GlcNAc subunit on undecaprenyl-pyrophosphoryl-MurNAc-pentapeptide (lipid intermediate I) to form undecaprenyl-pyrophosphoryl-MurNAc-(pentapeptide)GlcNAc (lipid intermediate II). The sequence is that of UDP-N-acetylglucosamine--N-acetylmuramyl-(pentapeptide) pyrophosphoryl-undecaprenol N-acetylglucosamine transferase from Nitratiruptor sp. (strain SB155-2).